Consider the following 393-residue polypeptide: Leucine aminopeptidase 1 (393 aa).

An N-terminal signal peptide occupies residues 1 to 18; that stretch reads MKLSQVSALAACVPAATA. Positions 19–84 are excised as a propeptide; it reads RFVELMEADH…GSQGLRIKES (66 aa). Residue Asn176 is glycosylated (N-linked (GlcNAc...) asparagine). Residues His184, Asp202, Glu241, and Asp268 each coordinate Zn(2+). Cys317 and Cys321 are joined by a disulfide. His350 serves as a coordination point for Zn(2+).

It belongs to the peptidase M28 family. M28E subfamily. In terms of assembly, monomer. Requires Zn(2+) as cofactor.

The protein resides in the secreted. In terms of biological role, extracellular aminopeptidase that allows assimilation of proteinaceous substrates. The polypeptide is Leucine aminopeptidase 1 (LAP1) (Metarhizium robertsii (strain ARSEF 23 / ATCC MYA-3075) (Metarhizium anisopliae (strain ARSEF 23))).